Reading from the N-terminus, the 296-residue chain is Phosphatidylserine decarboxylase proenzyme (296 aa).

Catalysis depends on charge relay system; for autoendoproteolytic cleavage activity residues D92, H149, and S251. Catalysis depends on S251, which acts as the Schiff-base intermediate with substrate; via pyruvic acid; for decarboxylase activity. Pyruvic acid (Ser); by autocatalysis is present on S251.

It belongs to the phosphatidylserine decarboxylase family. PSD-B subfamily. Prokaryotic type I sub-subfamily. In terms of assembly, heterodimer of a large membrane-associated beta subunit and a small pyruvoyl-containing alpha subunit. It depends on pyruvate as a cofactor. In terms of processing, is synthesized initially as an inactive proenzyme. Formation of the active enzyme involves a self-maturation process in which the active site pyruvoyl group is generated from an internal serine residue via an autocatalytic post-translational modification. Two non-identical subunits are generated from the proenzyme in this reaction, and the pyruvate is formed at the N-terminus of the alpha chain, which is derived from the carboxyl end of the proenzyme. The autoendoproteolytic cleavage occurs by a canonical serine protease mechanism, in which the side chain hydroxyl group of the serine supplies its oxygen atom to form the C-terminus of the beta chain, while the remainder of the serine residue undergoes an oxidative deamination to produce ammonia and the pyruvoyl prosthetic group on the alpha chain. During this reaction, the Ser that is part of the protease active site of the proenzyme becomes the pyruvoyl prosthetic group, which constitutes an essential element of the active site of the mature decarboxylase.

It localises to the cell membrane. The enzyme catalyses a 1,2-diacyl-sn-glycero-3-phospho-L-serine + H(+) = a 1,2-diacyl-sn-glycero-3-phosphoethanolamine + CO2. It functions in the pathway phospholipid metabolism; phosphatidylethanolamine biosynthesis; phosphatidylethanolamine from CDP-diacylglycerol: step 2/2. Functionally, catalyzes the formation of phosphatidylethanolamine (PtdEtn) from phosphatidylserine (PtdSer). This is Phosphatidylserine decarboxylase proenzyme from Hahella chejuensis (strain KCTC 2396).